The primary structure comprises 352 residues: Phosphoribosylformylglycinamidine cyclo-ligase (352 aa).

It belongs to the AIR synthase family.

Its subcellular location is the cytoplasm. It catalyses the reaction 2-formamido-N(1)-(5-O-phospho-beta-D-ribosyl)acetamidine + ATP = 5-amino-1-(5-phospho-beta-D-ribosyl)imidazole + ADP + phosphate + H(+). It functions in the pathway purine metabolism; IMP biosynthesis via de novo pathway; 5-amino-1-(5-phospho-D-ribosyl)imidazole from N(2)-formyl-N(1)-(5-phospho-D-ribosyl)glycinamide: step 2/2. The polypeptide is Phosphoribosylformylglycinamidine cyclo-ligase (Pseudomonas savastanoi pv. phaseolicola (strain 1448A / Race 6) (Pseudomonas syringae pv. phaseolicola (strain 1448A / Race 6))).